Here is a 183-residue protein sequence, read N- to C-terminus: MACGATLKRSMEFEALMSPQSPKRRRCAPLPGSPATPSPQRCGIRPEIQQGQQQPLGGDLRLTPEQILQNIKQEYTRYQRRRQLEGAFNQGEAGVSNEVQASCSSLTAPSSPGSLVKKDQPTFSLRQVGILCERLLKDHEDKIREEYEQILNIKLAEQYESFVKFTHDQIMRRYGARPTSYVS.

Residues 14–43 (EALMSPQSPKRRRCAPLPGSPATPSPQRCG) form a disordered region. Positions 180 to 183 (SYVS) match the SYVS motif motif.

This sequence belongs to the akirin family.

The protein resides in the nucleus. Molecular adapter that acts as a bridge between proteins, and which is involved skeletal muscle development. Functions as a signal transducer for MSTN during skeletal muscle regeneration and myogenesis. The chain is Akirin-1B (akirin1-b) from Xenopus laevis (African clawed frog).